The primary structure comprises 116 residues: Large ribosomal subunit protein bL17 (116 aa).

The protein belongs to the bacterial ribosomal protein bL17 family. Part of the 50S ribosomal subunit. Contacts protein L32.

This chain is Large ribosomal subunit protein bL17, found in Chloroflexus aurantiacus (strain ATCC 29366 / DSM 635 / J-10-fl).